The following is a 467-amino-acid chain: ATP synthase subunit beta (467 aa).

152-159 (GGAGVGKT) is a binding site for ATP.

This sequence belongs to the ATPase alpha/beta chains family. F-type ATPases have 2 components, CF(1) - the catalytic core - and CF(0) - the membrane proton channel. CF(1) has five subunits: alpha(3), beta(3), gamma(1), delta(1), epsilon(1). CF(0) has three main subunits: a(1), b(2) and c(9-12). The alpha and beta chains form an alternating ring which encloses part of the gamma chain. CF(1) is attached to CF(0) by a central stalk formed by the gamma and epsilon chains, while a peripheral stalk is formed by the delta and b chains.

The protein localises to the cell membrane. It carries out the reaction ATP + H2O + 4 H(+)(in) = ADP + phosphate + 5 H(+)(out). Produces ATP from ADP in the presence of a proton gradient across the membrane. The catalytic sites are hosted primarily by the beta subunits. This is ATP synthase subunit beta from Caldicellulosiruptor saccharolyticus (strain ATCC 43494 / DSM 8903 / Tp8T 6331).